Here is a 438-residue protein sequence, read N- to C-terminus: Protein ROOT INITIATION DEFECTIVE 3 (438 aa).

WD repeat units follow at residues 36–74 (AHGL…AEVK), 76–115 (YPVE…LLKK), 118–157 (GHYR…DDFQ), 171–212 (EHTM…LLKN), 214–253 (IFPS…EYGT), and 261–300 (EKGK…HVRT). The stretch at 394–434 (AATEMEMERLKLEYKRSLQMNEQWQKNYENLLQVVMEEEQI) forms a coiled coil.

Involved in meristem development. Acts as a negative regulator of the CUC-STM pathway in shoot apical meristem (SAM) neo-formation. The sequence is that of Protein ROOT INITIATION DEFECTIVE 3 (RID3) from Arabidopsis thaliana (Mouse-ear cress).